Here is a 466-residue protein sequence, read N- to C-terminus: Uridine kinase-like protein 3 (466 aa).

The tract at residues 41-246 (HGQPFVIGVA…IVQHIHTKLG (206 aa)) is uridine kinase. Positions 256–466 (NLYVIQSTFQ…GDRYFGTDDE (211 aa)) are uracil phosphoribosyltransferase. Residues Lys-280, Arg-289, and 323-326 (CKKL) each bind GTP. Residues Arg-333 and Arg-358 each coordinate 5-phospho-alpha-D-ribose 1-diphosphate. Arg-378 lines the GTP pocket. 5-phospho-alpha-D-ribose 1-diphosphate-binding positions include Asp-384, 389-392 (TGNS), and Glu-455. A uracil-binding site is contributed by 454–456 (GEF).

The protein in the N-terminal section; belongs to the uridine kinase family. In the C-terminal section; belongs to the UPRTase family. Mg(2+) serves as cofactor.

The catalysed reaction is UMP + diphosphate = 5-phospho-alpha-D-ribose 1-diphosphate + uracil. The enzyme catalyses cytidine + ATP = CMP + ADP + H(+). It carries out the reaction uridine + ATP = UMP + ADP + H(+). It functions in the pathway pyrimidine metabolism; UMP biosynthesis via salvage pathway; UMP from uracil: step 1/1. It participates in pyrimidine metabolism; CTP biosynthesis via salvage pathway; CTP from cytidine: step 1/3. The protein operates within pyrimidine metabolism; UMP biosynthesis via salvage pathway; UMP from uridine: step 1/1. Allosterically activated by GTP. Involved in the pyrimidine salvage pathway. The uracil phosphoribosyltransferase (UPRT) activity, that catalyzes the conversion of uracil and 5-phospho-alpha-D-ribose 1-diphosphate (PRPP) to UMP and diphosphate, is unsure. This chain is Uridine kinase-like protein 3 (UKL3), found in Arabidopsis thaliana (Mouse-ear cress).